Consider the following 538-residue polypeptide: Phosphoenolpyruvate carboxykinase (ATP) (538 aa).

Substrate contacts are provided by Arg-64, Tyr-205, and Lys-211. Residues Lys-211, His-230, and 246 to 254 (GLSGTGKTT) each bind ATP. The Mn(2+) site is built by Lys-211 and His-230. A Mn(2+)-binding site is contributed by Asp-267. ATP is bound by residues Glu-295, Arg-331, 447 to 448 (RI), and Thr-453. Arg-331 serves as a coordination point for substrate.

It belongs to the phosphoenolpyruvate carboxykinase (ATP) family. As to quaternary structure, monomer. Mn(2+) serves as cofactor.

It is found in the cytoplasm. The catalysed reaction is oxaloacetate + ATP = phosphoenolpyruvate + ADP + CO2. It participates in carbohydrate biosynthesis; gluconeogenesis. Its function is as follows. Involved in the gluconeogenesis. Catalyzes the conversion of oxaloacetate (OAA) to phosphoenolpyruvate (PEP) through direct phosphoryl transfer between the nucleoside triphosphate and OAA. The protein is Phosphoenolpyruvate carboxykinase (ATP) of Haemophilus influenzae (strain 86-028NP).